The following is a 510-amino-acid chain: NAD(P)H-quinone oxidoreductase subunit 2 A, chloroplastic (510 aa).

13 helical membrane passes run 24–44 (LLLF…GLIL), 57–77 (TPWL…ALLF), 99–119 (IFQF…VEYI), 124–144 (MAIT…MFLC), 149–169 (LITI…LSGY), 183–203 (YLLM…WLYG), 229–249 (ISIA…PAPF), 295–315 (WHLL…LIAI), 323–343 (MLAY…IVGD), 354–374 (YMLF…LFGL), 395–415 (ALSS…AGFF), 418–438 (LYLF…IGLL), and 484–504 (MIVC…IIAI).

It belongs to the complex I subunit 2 family. In terms of assembly, NDH is composed of at least 16 different subunits, 5 of which are encoded in the nucleus.

The protein resides in the plastid. It localises to the chloroplast thylakoid membrane. The catalysed reaction is a plastoquinone + NADH + (n+1) H(+)(in) = a plastoquinol + NAD(+) + n H(+)(out). It catalyses the reaction a plastoquinone + NADPH + (n+1) H(+)(in) = a plastoquinol + NADP(+) + n H(+)(out). Its function is as follows. NDH shuttles electrons from NAD(P)H:plastoquinone, via FMN and iron-sulfur (Fe-S) centers, to quinones in the photosynthetic chain and possibly in a chloroplast respiratory chain. The immediate electron acceptor for the enzyme in this species is believed to be plastoquinone. Couples the redox reaction to proton translocation, and thus conserves the redox energy in a proton gradient. In Nuphar advena (Common spatterdock), this protein is NAD(P)H-quinone oxidoreductase subunit 2 A, chloroplastic.